A 370-amino-acid polypeptide reads, in one-letter code: 3-isopropylmalate dehydrogenase (370 aa).

Residue 77–90 coordinates NAD(+); that stretch reads GPKWDAVPYDARPE. Arginine 97, arginine 107, arginine 135, and aspartate 226 together coordinate substrate. Mg(2+)-binding residues include aspartate 226, aspartate 250, and aspartate 254. NAD(+) is bound at residue 290 to 302; sequence GSAPDIAGKGLAN.

Belongs to the isocitrate and isopropylmalate dehydrogenases family. LeuB type 1 subfamily. As to quaternary structure, homodimer. Mg(2+) is required as a cofactor. It depends on Mn(2+) as a cofactor.

The protein localises to the cytoplasm. The enzyme catalyses (2R,3S)-3-isopropylmalate + NAD(+) = 4-methyl-2-oxopentanoate + CO2 + NADH. The protein operates within amino-acid biosynthesis; L-leucine biosynthesis; L-leucine from 3-methyl-2-oxobutanoate: step 3/4. Catalyzes the oxidation of 3-carboxy-2-hydroxy-4-methylpentanoate (3-isopropylmalate) to 3-carboxy-4-methyl-2-oxopentanoate. The product decarboxylates to 4-methyl-2 oxopentanoate. The sequence is that of 3-isopropylmalate dehydrogenase from Rhodopseudomonas palustris (strain HaA2).